The chain runs to 496 residues: MDHNDNDLQGTNSMGSLSGLDVRRRIPIKLISKHPNKIKPAPRPQRNMNRIPTKPQPGFDYNEEERYENKGDVFNNQRRFSAHLFWDFKLNLIGEKEDTPVHFCDKCGLPIKIYGRMIPCKHVFCYDCALMHEKKADKLCPGTLVEDSTDTFKRMSCNDPVQRIEQCARGSLFMCSIVQGCKRTYLSQRDLQAHINHRHMRASKPTARPQPEPIHPPLAPPPAEIPDRFIMPPDKHHLSHMPPKQHILMPPPPMQHVPHEHFSQQHDDIRPSPADISLAPPPPRSVNQDAFRISTRQHSNLITVPIQDDSNSGARETPQAPGPTLHHPEYPGQPVVAHPHHIMPPQQHYAPPPPPPPPISHPMQHPPQAAGTPHMVYSQGPPPPMTTAPPPITPPPGHIIAQIPPYMNHPPPGPPPQHGGPPVNAPPPHHYNPSSMPQFNEDQGTLSPPFTQPGGMSPGMWPAPRGPPPRMQGPPSQAPMPGPHHPDQARYRPYYQ.

The disordered stretch occupies residues Pro-35 to Asp-60. The segment at Cys-104–Leu-144 adopts an RING-type; degenerate zinc-finger fold. Residues Cys-157–His-215 are HYB domain. The segment at Phe-173–His-199 adopts a C2H2-type zinc-finger fold. The span at Val-304–Ala-314 shows a compositional bias: polar residues. The segment at Val-304–Gln-496 is disordered. 3 stretches are compositionally biased toward pro residues: residues Ala-350–Ser-360, Gly-380–Gly-397, and Met-407–His-430. Residues Ser-434–Pro-449 show a composition bias toward polar residues. Residues Pro-464–Pro-483 are compositionally biased toward pro residues.

The protein belongs to the Hakai family. In terms of assembly, homodimer. Interacts with tyrosine-phosphorylated SRC substrates. Component of the WMM complex, a N6-methyltransferase complex composed of a catalytic subcomplex, named MAC, and of an associated subcomplex, named MACOM. Component of the MACOM subcomplex.

The protein localises to the nucleus speckle. It is found in the nucleus. It localises to the nucleoplasm. It catalyses the reaction S-ubiquitinyl-[E2 ubiquitin-conjugating enzyme]-L-cysteine + [acceptor protein]-L-lysine = [E2 ubiquitin-conjugating enzyme]-L-cysteine + N(6)-ubiquitinyl-[acceptor protein]-L-lysine.. Its pathway is protein modification; protein ubiquitination. Functionally, E3 ubiquitin-protein ligase that mediates ubiquitination of several tyrosine-phosphorylated Src substrates. Associated component of the WMM complex, a complex that mediates N6-methyladenosine (m6A) methylation of RNAs, a modification that plays a role in the efficiency of mRNA splicing and RNA processing. This is E3 ubiquitin-protein ligase Hakai from Xenopus laevis (African clawed frog).